A 335-amino-acid chain; its full sequence is Methionine import ATP-binding protein MetN 2 (335 aa).

An ABC transporter domain is found at 2-242; that stretch reads IEFQNVHKTY…PEHPTTKRFV (241 aa). Residue 38 to 45 coordinates ATP; it reads GHSGAGKS.

This sequence belongs to the ABC transporter superfamily. Methionine importer (TC 3.A.1.24) family. The complex is composed of two ATP-binding proteins (MetN), two transmembrane proteins (MetI) and a solute-binding protein (MetQ).

It is found in the cell inner membrane. It catalyses the reaction L-methionine(out) + ATP + H2O = L-methionine(in) + ADP + phosphate + H(+). It carries out the reaction D-methionine(out) + ATP + H2O = D-methionine(in) + ADP + phosphate + H(+). Functionally, part of the ABC transporter complex MetNIQ involved in methionine import. Responsible for energy coupling to the transport system. The chain is Methionine import ATP-binding protein MetN 2 from Pseudomonas entomophila (strain L48).